Here is a 344-residue protein sequence, read N- to C-terminus: Outer membrane protein assembly factor BamC (344 aa).

An N-terminal signal peptide occupies residues 1–24 (MAYSVQKSRLAKVAGVSLVLLLAA). Cys25 is lipidated: N-palmitoyl cysteine. Cys25 carries S-diacylglycerol cysteine lipidation.

It belongs to the BamC family. As to quaternary structure, part of the Bam complex, which is composed of the outer membrane protein BamA, and four lipoproteins BamB, BamC, BamD and BamE. Forms a subcomplex with BamD and BamE. The Bam complex has the shape of a hat, with the BamA beta-barrel crown in the outer membrane and the periplasmic brim formed by the BamA POTRA domains and the 4 lipoproteins.

It is found in the cell outer membrane. Part of the outer membrane protein assembly complex (Bam), which is involved in assembly and insertion of beta-barrel proteins into the outer membrane. Nonessential member of the complex that stabilizes the interaction between the essential proteins BamA and BamD. Efficient substrate folding and insertion into the outer membrane requires all 5 subunits. A lateral gate may open between the first and last strands of the BamA beta-barrel that allows substrate to insert into the outer membrane; comparison of the structures of complete and nearly complete Bam complexes show there is considerable movement of all 5 proteins. The protein is Outer membrane protein assembly factor BamC of Escherichia coli (strain K12).